Here is a 275-residue protein sequence, read N- to C-terminus: 3',5'-cyclic adenosine monophosphate phosphodiesterase CpdA (275 aa).

Residues aspartate 22, histidine 24, aspartate 64, asparagine 94, histidine 164, histidine 203, and histidine 205 each coordinate Fe cation. Residues histidine 24, aspartate 64, and 94–95 (NH) contribute to the AMP site. AMP is bound at residue histidine 205.

This sequence belongs to the cyclic nucleotide phosphodiesterase class-III family. The cofactor is Fe(2+).

It catalyses the reaction 3',5'-cyclic AMP + H2O = AMP + H(+). Functionally, hydrolyzes cAMP to 5'-AMP. Plays an important regulatory role in modulating the intracellular concentration of cAMP, thereby influencing cAMP-dependent processes. This Escherichia coli O157:H7 protein is 3',5'-cyclic adenosine monophosphate phosphodiesterase CpdA.